We begin with the raw amino-acid sequence, 162 residues long: SsrA-binding protein (162 aa).

It belongs to the SmpB family.

The protein localises to the cytoplasm. Required for rescue of stalled ribosomes mediated by trans-translation. Binds to transfer-messenger RNA (tmRNA), required for stable association of tmRNA with ribosomes. tmRNA and SmpB together mimic tRNA shape, replacing the anticodon stem-loop with SmpB. tmRNA is encoded by the ssrA gene; the 2 termini fold to resemble tRNA(Ala) and it encodes a 'tag peptide', a short internal open reading frame. During trans-translation Ala-aminoacylated tmRNA acts like a tRNA, entering the A-site of stalled ribosomes, displacing the stalled mRNA. The ribosome then switches to translate the ORF on the tmRNA; the nascent peptide is terminated with the 'tag peptide' encoded by the tmRNA and targeted for degradation. The ribosome is freed to recommence translation, which seems to be the essential function of trans-translation. The polypeptide is SsrA-binding protein (Buchnera aphidicola subsp. Acyrthosiphon pisum (strain 5A)).